A 124-amino-acid polypeptide reads, in one-letter code: Small ribosomal subunit protein uS12 (124 aa).

Positions methionine 1–leucine 24 are disordered. Aspartate 90 carries the post-translational modification 3-methylthioaspartic acid.

Belongs to the universal ribosomal protein uS12 family. In terms of assembly, part of the 30S ribosomal subunit. Contacts proteins S8 and S17. May interact with IF1 in the 30S initiation complex.

In terms of biological role, with S4 and S5 plays an important role in translational accuracy. Interacts with and stabilizes bases of the 16S rRNA that are involved in tRNA selection in the A site and with the mRNA backbone. Located at the interface of the 30S and 50S subunits, it traverses the body of the 30S subunit contacting proteins on the other side and probably holding the rRNA structure together. The combined cluster of proteins S8, S12 and S17 appears to hold together the shoulder and platform of the 30S subunit. This is Small ribosomal subunit protein uS12 from Anaplasma phagocytophilum (strain HZ).